A 91-amino-acid chain; its full sequence is Pyruvate kinase (91 aa).

A substrate-binding site is contributed by Arg48. Residues Asn50, Ser52, Asp82, and Thr83 each contribute to the K(+) site. 50-53 (NFSH) is a binding site for ATP. Position 89 (Arg89) interacts with ATP.

Belongs to the pyruvate kinase family. In terms of assembly, homotetramer. Requires Mg(2+) as cofactor. K(+) is required as a cofactor.

It catalyses the reaction pyruvate + ATP = phosphoenolpyruvate + ADP + H(+). It functions in the pathway carbohydrate degradation; glycolysis; pyruvate from D-glyceraldehyde 3-phosphate: step 5/5. The sequence is that of Pyruvate kinase from Leishmania braziliensis.